We begin with the raw amino-acid sequence, 437 residues long: Nicotinate phosphoribosyltransferase (437 aa).

A Phosphohistidine; by autocatalysis modification is found at histidine 231.

It belongs to the NAPRTase family. Post-translationally, transiently phosphorylated on a His residue during the reaction cycle. Phosphorylation strongly increases the affinity for substrates and increases the rate of nicotinate D-ribonucleotide production. Dephosphorylation regenerates the low-affinity form of the enzyme, leading to product release.

The catalysed reaction is nicotinate + 5-phospho-alpha-D-ribose 1-diphosphate + ATP + H2O = nicotinate beta-D-ribonucleotide + ADP + phosphate + diphosphate. It functions in the pathway cofactor biosynthesis; NAD(+) biosynthesis; nicotinate D-ribonucleotide from nicotinate: step 1/1. Functionally, catalyzes the synthesis of beta-nicotinate D-ribonucleotide from nicotinate and 5-phospho-D-ribose 1-phosphate at the expense of ATP. This chain is Nicotinate phosphoribosyltransferase, found in Vibrio vulnificus (strain CMCP6).